The sequence spans 462 residues: L-seryl-tRNA(Sec) selenium transferase (462 aa).

Lys295 carries the post-translational modification N6-(pyridoxal phosphate)lysine.

The protein belongs to the SelA family. In terms of assembly, homodecamer; pentamer of dimers. Binds only one seryl-tRNA(Sec) per dimer. It depends on pyridoxal 5'-phosphate as a cofactor.

It is found in the cytoplasm. It catalyses the reaction L-seryl-tRNA(Sec) + selenophosphate + H(+) = L-selenocysteinyl-tRNA(Sec) + phosphate. Its pathway is aminoacyl-tRNA biosynthesis; selenocysteinyl-tRNA(Sec) biosynthesis; selenocysteinyl-tRNA(Sec) from L-seryl-tRNA(Sec) (bacterial route): step 1/1. Converts seryl-tRNA(Sec) to selenocysteinyl-tRNA(Sec) required for selenoprotein biosynthesis. The sequence is that of L-seryl-tRNA(Sec) selenium transferase from Klebsiella pneumoniae subsp. pneumoniae (strain ATCC 700721 / MGH 78578).